The following is a 162-amino-acid chain: Transcription elongation factor GreA (162 aa).

Residues 45–74 (ENAEYEAAREKQAFIEGRIKELEDMTARAE) adopt a coiled-coil conformation.

It belongs to the GreA/GreB family.

In terms of biological role, necessary for efficient RNA polymerase transcription elongation past template-encoded arresting sites. The arresting sites in DNA have the property of trapping a certain fraction of elongating RNA polymerases that pass through, resulting in locked ternary complexes. Cleavage of the nascent transcript by cleavage factors such as GreA or GreB allows the resumption of elongation from the new 3'terminus. GreA releases sequences of 2 to 3 nucleotides. The sequence is that of Transcription elongation factor GreA from Rickettsia typhi (strain ATCC VR-144 / Wilmington).